An 87-amino-acid polypeptide reads, in one-letter code: Dynein light chain 1, cytoplasmic (87 aa).

This sequence belongs to the dynein light chain family. As to quaternary structure, homodimer. Cytoplasmic dynein consists of two catalytic heavy chains (HCs) and a number of non-catalytic subunits which present intermediate chains (ICs), light intermediate chains (LICs) and light chains (LCs). Component of the nuclear pore complex (NPC). NPC constitutes the exclusive means of nucleocytoplasmic transport. NPCs allow the passive diffusion of ions and small molecules and the active, nuclear transport receptor-mediated bidirectional transport of macromolecules such as proteins, RNAs, ribonucleoparticles (RNPs), and ribosomal subunits across the nuclear envelope. Due to its 8-fold rotational symmetry, all subunits are present with 8 copies or multiples thereof.

The protein resides in the cytoplasm. Its subcellular location is the cytoskeleton. The protein localises to the nucleus. It localises to the nuclear pore complex. In terms of biological role, acts as one of several non-catalytic accessory components of the cytoplasmic dynein complex that are thought to be involved in linking dynein to cargos and to adapter proteins that regulate dynein function. Cytoplasmic dynein 1 acts as a motor for the intracellular retrograde motility of vesicles and organelles along microtubules. May play a role in changing or maintaining the spatial distribution of cytoskeletal structures. Also a component of the nuclear pore complex. This Kluyveromyces lactis (strain ATCC 8585 / CBS 2359 / DSM 70799 / NBRC 1267 / NRRL Y-1140 / WM37) (Yeast) protein is Dynein light chain 1, cytoplasmic (DYN2).